A 158-amino-acid polypeptide reads, in one-letter code: 6,7-dimethyl-8-ribityllumazine synthase (158 aa).

Residues Phe23, 61-63, and 85-87 contribute to the 5-amino-6-(D-ribitylamino)uracil site; these read SFE and AVI. A (2S)-2-hydroxy-3-oxobutyl phosphate-binding site is contributed by 90–91; sequence ET. His93 (proton donor) is an active-site residue. Phe118 is a 5-amino-6-(D-ribitylamino)uracil binding site. Arg132 is a (2S)-2-hydroxy-3-oxobutyl phosphate binding site.

This sequence belongs to the DMRL synthase family.

It catalyses the reaction (2S)-2-hydroxy-3-oxobutyl phosphate + 5-amino-6-(D-ribitylamino)uracil = 6,7-dimethyl-8-(1-D-ribityl)lumazine + phosphate + 2 H2O + H(+). The protein operates within cofactor biosynthesis; riboflavin biosynthesis; riboflavin from 2-hydroxy-3-oxobutyl phosphate and 5-amino-6-(D-ribitylamino)uracil: step 1/2. Its function is as follows. Catalyzes the formation of 6,7-dimethyl-8-ribityllumazine by condensation of 5-amino-6-(D-ribitylamino)uracil with 3,4-dihydroxy-2-butanone 4-phosphate. This is the penultimate step in the biosynthesis of riboflavin. The polypeptide is 6,7-dimethyl-8-ribityllumazine synthase (Prochlorococcus marinus (strain MIT 9301)).